Reading from the N-terminus, the 337-residue chain is MAEVEKLKQLQLQREALKKRGEQKVKETEKKRTEESVQSVCPECGSRQLVHDYERAELVCQNCGLVLDEEFIDRGPEWRAFDHDQRMKRSRVGAPMTFTIHDKGLSTMIDWRNRDSYGRAISSKNRAQLYRLRKWQRRIRVSNATERNLAFALSELDRMASALGLPRNVRETAAVVYRDAVDKNLIRGRSIEGVAAAALYAACRQCSVPRTLDEIAEVSRVSRKEIGRTYRFISRELGLKLLPTSPIDYVPRFCSGLNLKGEVQSRAVEILRQAGERELTSGRGPTGVAAAAIYISSILGGERRTQREVAEVAGVTEVTIRNRYKELAEKLDIEIIL.

The segment at 36–68 (SVQSVCPECGSRQLVHDYERAELVCQNCGLVLD) adopts a TFIIB-type zinc-finger fold. The Zn(2+) site is built by Cys41, Cys44, Cys60, and Cys63. 2 tandem repeats follow at residues 154–237 (SELD…SREL) and 248–329 (DYVP…ELAE).

Belongs to the TFIIB family.

Functionally, stabilizes TBP binding to an archaeal box-A promoter. Also responsible for recruiting RNA polymerase II to the pre-initiation complex (DNA-TBP-TFIIB). The sequence is that of Transcription initiation factor IIB from Methanoculleus marisnigri (strain ATCC 35101 / DSM 1498 / JR1).